The chain runs to 450 residues: MSMEFDAVIIGGGVSGCATFYTLSEYSSLKRVAIVEKCSKLAQISSSAKANSQTIHDGSIETNYTPEKAKKVRLSAYKTRQYALNKGLQNKAIFETQKMAIGVGDEECEFMKKRYESFKEIFVGLEEFDKQTIKELEPNVILGASGIDRHESIIGHGFRKDWSTMNYAKLSENFVEEALKLKPNNQVFLNFKVKKIEKRNDTYALISEDAEEVYAKFVLVNAGSYALPLAQSMGYGLDLGCLPVAGSFYFVPDLLKGKVYTVQNPKLPFAAVHGDPDAIIKGKTRIGPTALAMPKLERNKCWLKGISLELLKMDLNKDVFKIAFDLMSDKEIRNYVLKNMVFELPVIGKREFLKDAQKIIPSLSLEDLEYAHGFGEVRPQVLDKTKRKLELGEKKICTHKGITFNMTPSPGATSCLQNALVDSQEIVAYLGESFELERFYKDLSPEELES.

The protein belongs to the MQO family. FAD is required as a cofactor.

The enzyme catalyses (S)-malate + a quinone = a quinol + oxaloacetate. It participates in carbohydrate metabolism; tricarboxylic acid cycle; oxaloacetate from (S)-malate (quinone route): step 1/1. This chain is Probable malate:quinone oxidoreductase, found in Helicobacter acinonychis (strain Sheeba).